A 614-amino-acid polypeptide reads, in one-letter code: MDPSKDTSPQVRLEKITYNYPYSDAAALSDVNLELKKGEFVLLAGPSGCGKSTLVRCLNRLVPEVSGGSFSGRVLLRGKDLTHEKVHSLALEVGMVFQNPETQLFSLTVAEDLAFGPENLGLPGEEIRIRVKKVLKEVGLKGLEDHFIFTLSGGEKQRTAIGGNLAMQPEILVLDEPTSDLDPAGTGEVLELLKHLNAENRTTLILIEHKLDAVFEMVDRMLVMDEGRVILDGKPFEILCREEEKLRKLGIHPPQFTEIARFLGFFSENSSIPAYETLLKRLTELLQASEVEIHPEDLEKRESEIPAPAPQPRNTPPHVLIEQLCYRHEDGSEAFEKLNLEIKRGEFLALLGHNGAGKTTLAGHLIGFYRPASGRILLDGKDISGYSTARLSKQVGYLFQNPDSQIFTNSVFEEVCFGLENLGMPEEKIKKLADSALEMMELSAYRNRHPHALSRGQRQRLAVASILALEPDLLILDEPTTGQDRGHIRKFLDKIRKLNGLGKTVILITHDMELAAEYAERVVVMKQGKIFLDGPTAEVFSSPEELGAAGLLPPLPARLALDLRKLGIDIPRLLTVSDLKSFLKARCPELSACRPTEIEKIVEENDSGEEVSLF.

ABC transporter domains lie at 11-251 and 319-552; these read VRLE…KLGI and VLIE…AGLL. ATP is bound by residues 45–52 and 352–359; these read GPSGCGKS and GHNGAGKT.

It belongs to the ABC transporter superfamily.

It is found in the cell membrane. Functionally, probably part of an ABC transporter complex. Responsible for energy coupling to the transport system. This is Putative ABC transporter ATP-binding protein MA_1747 from Methanosarcina acetivorans (strain ATCC 35395 / DSM 2834 / JCM 12185 / C2A).